We begin with the raw amino-acid sequence, 100 residues long: Integration host factor subunit beta (100 aa).

This sequence belongs to the bacterial histone-like protein family. In terms of assembly, heterodimer of an alpha and a beta chain.

In terms of biological role, this protein is one of the two subunits of integration host factor, a specific DNA-binding protein that functions in genetic recombination as well as in transcriptional and translational control. The protein is Integration host factor subunit beta of Rhodospirillum rubrum (strain ATCC 11170 / ATH 1.1.1 / DSM 467 / LMG 4362 / NCIMB 8255 / S1).